Reading from the N-terminus, the 626-residue chain is Probable potassium transport system protein Kup (626 aa).

The next 12 membrane-spanning stretches (helical) occupy residues 11 to 31 (FLTL…TSPL), 55 to 75 (LSLI…VFVM), 103 to 123 (AWII…GMIT), 140 to 160 (AALS…LFLI), 171 to 191 (LFGP…FVSL), 216 to 236 (LGFA…ALYA), 250 to 270 (WFAV…ALLI), 282 to 302 (LLVP…ATVI), 340 to 360 (IYAP…VLAF), 369 to 389 (AYGL…LVVA), 395 to 415 (WPGL…LSFL), and 422 to 442 (LGDG…VMST).

The protein belongs to the HAK/KUP transporter (TC 2.A.72) family.

Its subcellular location is the cell inner membrane. The enzyme catalyses K(+)(in) + H(+)(in) = K(+)(out) + H(+)(out). In terms of biological role, transport of potassium into the cell. Likely operates as a K(+):H(+) symporter. The sequence is that of Probable potassium transport system protein Kup from Methylococcus capsulatus (strain ATCC 33009 / NCIMB 11132 / Bath).